A 572-amino-acid polypeptide reads, in one-letter code: Hemolysin-1 (572 aa).

Bacterial hemolysins are exotoxins that attack blood cell membranes and cause cell rupture by mechanisms not clearly defined. The chain is Hemolysin-1 (ash1) from Aeromonas salmonicida.